Consider the following 553-residue polypeptide: Putative transport protein KPK_0013 (553 aa).

5 helical membrane passes run isoleucine 4–valine 24, glycine 28–aspartate 48, phenylalanine 65–serine 85, leucine 95–phenylalanine 115, and methionine 158–valine 178. RCK C-terminal domains follow at residues arginine 192 to glutamine 276 and alanine 279 to asparagine 361. The next 6 helical transmembrane spans lie at methionine 371–isoleucine 391, alanine 403–phenylalanine 425, leucine 437–threonine 457, leucine 464–leucine 484, tyrosine 493–alanine 513, and proline 532–leucine 552.

It belongs to the AAE transporter (TC 2.A.81) family. YidE subfamily.

It localises to the cell membrane. The protein is Putative transport protein KPK_0013 of Klebsiella pneumoniae (strain 342).